Reading from the N-terminus, the 211-residue chain is ATP phosphoribosyltransferase (211 aa).

This sequence belongs to the ATP phosphoribosyltransferase family. Short subfamily. As to quaternary structure, heteromultimer composed of HisG and HisZ subunits.

Its subcellular location is the cytoplasm. It carries out the reaction 1-(5-phospho-beta-D-ribosyl)-ATP + diphosphate = 5-phospho-alpha-D-ribose 1-diphosphate + ATP. Its pathway is amino-acid biosynthesis; L-histidine biosynthesis; L-histidine from 5-phospho-alpha-D-ribose 1-diphosphate: step 1/9. Functionally, catalyzes the condensation of ATP and 5-phosphoribose 1-diphosphate to form N'-(5'-phosphoribosyl)-ATP (PR-ATP). Has a crucial role in the pathway because the rate of histidine biosynthesis seems to be controlled primarily by regulation of HisG enzymatic activity. The sequence is that of ATP phosphoribosyltransferase from Bacillus cereus (strain ATCC 14579 / DSM 31 / CCUG 7414 / JCM 2152 / NBRC 15305 / NCIMB 9373 / NCTC 2599 / NRRL B-3711).